The sequence spans 248 residues: 1-(5-phosphoribosyl)-5-[(5-phosphoribosylamino)methylideneamino] imidazole-4-carboxamide isomerase (248 aa).

Residue Asp8 is the Proton acceptor of the active site. Residue Asp131 is the Proton donor of the active site.

Belongs to the HisA/HisF family.

Its subcellular location is the cytoplasm. It carries out the reaction 1-(5-phospho-beta-D-ribosyl)-5-[(5-phospho-beta-D-ribosylamino)methylideneamino]imidazole-4-carboxamide = 5-[(5-phospho-1-deoxy-D-ribulos-1-ylimino)methylamino]-1-(5-phospho-beta-D-ribosyl)imidazole-4-carboxamide. It participates in amino-acid biosynthesis; L-histidine biosynthesis; L-histidine from 5-phospho-alpha-D-ribose 1-diphosphate: step 4/9. This is 1-(5-phosphoribosyl)-5-[(5-phosphoribosylamino)methylideneamino] imidazole-4-carboxamide isomerase from Cupriavidus taiwanensis (strain DSM 17343 / BCRC 17206 / CCUG 44338 / CIP 107171 / LMG 19424 / R1) (Ralstonia taiwanensis (strain LMG 19424)).